The sequence spans 217 residues: MTDNNEFDVADLRREYIRGGLRRSDLTENPLELFERWLKQACDARLPDPTAMCVATVDANGQPYQRIVLLKHYDDQGLVFYTNLGSRKAQQLAQNPHISLLFPWHMLDRQVIFLGTTERLSTLEVLKYFSSRPKDSQIGAWVSQQSSRISARGVLESKFLELKQKFQQGEVPLPSFWGGFRVKFDSVEFWQGGEHRLHDRFIYQRNADTWKIDRLAP.

Substrate contacts are provided by residues 13–16 (RREY) and Lys71. FMN contacts are provided by residues 66–71 (RIVLLK), 81–82 (YT), Arg87, Lys88, and Gln110. Substrate contacts are provided by Tyr128, Arg132, and Ser136. FMN contacts are provided by residues 145–146 (QS) and Trp190. 196-198 (RLH) contacts substrate. Arg200 contacts FMN.

It belongs to the pyridoxamine 5'-phosphate oxidase family. Homodimer. The cofactor is FMN.

The enzyme catalyses pyridoxamine 5'-phosphate + O2 + H2O = pyridoxal 5'-phosphate + H2O2 + NH4(+). It carries out the reaction pyridoxine 5'-phosphate + O2 = pyridoxal 5'-phosphate + H2O2. The protein operates within cofactor metabolism; pyridoxal 5'-phosphate salvage; pyridoxal 5'-phosphate from pyridoxamine 5'-phosphate: step 1/1. Its pathway is cofactor metabolism; pyridoxal 5'-phosphate salvage; pyridoxal 5'-phosphate from pyridoxine 5'-phosphate: step 1/1. Catalyzes the oxidation of either pyridoxine 5'-phosphate (PNP) or pyridoxamine 5'-phosphate (PMP) into pyridoxal 5'-phosphate (PLP). The sequence is that of Pyridoxine/pyridoxamine 5'-phosphate oxidase from Yersinia enterocolitica serotype O:8 / biotype 1B (strain NCTC 13174 / 8081).